Reading from the N-terminus, the 125-residue chain is Mating factor alpha (125 aa).

Residues 1-22 (MKLFTTLSASLIFIHSLGSTRA) form the signal peptide. Asparagine 57 and asparagine 67 each carry an N-linked (GlcNAc...) asparagine glycan.

The polypeptide is Mating factor alpha (Lachancea kluyveri (Yeast)).